A 541-amino-acid polypeptide reads, in one-letter code: Chaperonin GroEL (541 aa).

ATP-binding positions include 29-32 (TLGP), 86-90 (DGTTT), Gly-413, 478-480 (DAL), and Asp-494.

It belongs to the chaperonin (HSP60) family. Forms a cylinder of 14 subunits composed of two heptameric rings stacked back-to-back. Interacts with the co-chaperonin GroES.

The protein resides in the cytoplasm. The catalysed reaction is ATP + H2O + a folded polypeptide = ADP + phosphate + an unfolded polypeptide.. Its function is as follows. Together with its co-chaperonin GroES, plays an essential role in assisting protein folding. The GroEL-GroES system forms a nano-cage that allows encapsulation of the non-native substrate proteins and provides a physical environment optimized to promote and accelerate protein folding. The polypeptide is Chaperonin GroEL (Alkaliphilus oremlandii (strain OhILAs) (Clostridium oremlandii (strain OhILAs))).